The primary structure comprises 901 residues: MNLMDRVLHAGEGKIIRRLNRIVGQVNSIEEDYVAMDDDELAGQTADFRQRLDNGESLDRLLPEAFATVREASKRVLGKRHFDVQIMGGAALHQCNIAEMKTGEGKTLVGLLPAYLEGLLGEGVHIVTVNDYLARVQSEQMGRVHRFLGLSISAILSDMPPMARKEAYKADVTYGTNNEFGFDYLRDNMASSLSECVQRGHHYAIVDEVDSILVDEARTPLIISGPAEENKQWYPEFAKIVSRLERDVDYEVDEKKRTVSVLGHGITVVEERLGIENLYESANTPLIGYLNNAIKAKELFHRDKDYVVVGGEVLIVDEHTGRTLAGRRYNEGLHQALEAKEHVEIKDEYQTLATITLQNYFRMYDKLAGMTGTAKTEESEFQKIYGLGVIPIPTNRPMIRKDQKDLIYRTEDAKFDAIIADVVERHEAGQPILIGTASVAKSELLSEKLKRAGVPHKVLNAKHHESEAAIVALAGRKGAVTVSTNMAGRGTDIILGGNPEFLTELDLREKGLDPLEDQDAYQTAWNNTLAKYEEQSQAEHNEVEGLGGLYVIGSERHESRRIDNQLRGRSGRQGDPGESRFYLSLQDELMRLFKPEVIDRAMVTLKMPEDMPIESKWVSRQIESAQKQVEAQNFEMRKNVLKYDDVMNRQRHVIYGDRRKVLEGADVETELRATTDRVVEAGVRKYAEGYSEDWDLEAMWNEIGTVYPVGLDLDEYADCQDVEELIEDFKADAQEAYDRRESELGEATMRQLEREVLLTVLDRKWREHLYEMDYLREGIGLRAMAQRDPLVEYQREGGDMFNSMMDSFKEEVVGFLFNLEIETGPQVGLVTDDGGNPVTADSVLPKVNRPRRALTYSAPDEQGEAETTSEDGQKPRGEGNRAARRSAASKKPKNRRNKKRR.

Residues Gln85, 103–107 (GEGKT), and Asp492 contribute to the ATP site. Positions 828 to 901 (GLVTDDGGNP…PKNRRNKKRR (74 aa)) are disordered. Residues 871–881 (DGQKPRGEGNR) show a composition bias toward basic and acidic residues. Basic residues predominate over residues 882–901 (AARRSAASKKPKNRRNKKRR).

It belongs to the SecA family. As to quaternary structure, monomer and homodimer. Part of the essential Sec protein translocation apparatus which comprises SecA, SecYEG and auxiliary proteins SecDF. Other proteins may also be involved.

The protein localises to the cell membrane. The protein resides in the cytoplasm. It catalyses the reaction ATP + H2O + cellular proteinSide 1 = ADP + phosphate + cellular proteinSide 2.. Its function is as follows. Part of the Sec protein translocase complex. Interacts with the SecYEG preprotein conducting channel. Has a central role in coupling the hydrolysis of ATP to the transfer of proteins into and across the cell membrane, serving as an ATP-driven molecular motor driving the stepwise translocation of polypeptide chains across the membrane. The chain is Protein translocase subunit SecA from Cutibacterium acnes (strain DSM 16379 / KPA171202) (Propionibacterium acnes).